Consider the following 354-residue polypeptide: UDP-N-acetylglucosamine--N-acetylmuramyl-(pentapeptide) pyrophosphoryl-undecaprenol N-acetylglucosamine transferase (354 aa).

Residues 11 to 13 (TAG), arginine 164, serine 194, and glutamine 289 each bind UDP-N-acetyl-alpha-D-glucosamine.

It belongs to the glycosyltransferase 28 family. MurG subfamily.

It localises to the cell membrane. The enzyme catalyses di-trans,octa-cis-undecaprenyl diphospho-N-acetyl-alpha-D-muramoyl-L-alanyl-D-glutamyl-meso-2,6-diaminopimeloyl-D-alanyl-D-alanine + UDP-N-acetyl-alpha-D-glucosamine = di-trans,octa-cis-undecaprenyl diphospho-[N-acetyl-alpha-D-glucosaminyl-(1-&gt;4)]-N-acetyl-alpha-D-muramoyl-L-alanyl-D-glutamyl-meso-2,6-diaminopimeloyl-D-alanyl-D-alanine + UDP + H(+). Its pathway is cell wall biogenesis; peptidoglycan biosynthesis. Cell wall formation. Catalyzes the transfer of a GlcNAc subunit on undecaprenyl-pyrophosphoryl-MurNAc-pentapeptide (lipid intermediate I) to form undecaprenyl-pyrophosphoryl-MurNAc-(pentapeptide)GlcNAc (lipid intermediate II). This chain is UDP-N-acetylglucosamine--N-acetylmuramyl-(pentapeptide) pyrophosphoryl-undecaprenol N-acetylglucosamine transferase, found in Clostridium botulinum (strain Langeland / NCTC 10281 / Type F).